The sequence spans 208 residues: 2-phospho-L-lactate guanylyltransferase (208 aa).

The protein belongs to the CofC family. In terms of assembly, homodimer.

It catalyses the reaction (2S)-2-phospholactate + GTP + H(+) = (2S)-lactyl-2-diphospho-5'-guanosine + diphosphate. It participates in cofactor biosynthesis; coenzyme F420 biosynthesis. Its function is as follows. Guanylyltransferase that catalyzes the activation of (2S)-2-phospholactate (2-PL) as (2S)-lactyl-2-diphospho-5'-guanosine, via the condensation of 2-PL with GTP. It is involved in the biosynthesis of coenzyme F420, a hydride carrier cofactor. This is 2-phospho-L-lactate guanylyltransferase from Methanosarcina acetivorans (strain ATCC 35395 / DSM 2834 / JCM 12185 / C2A).